Here is a 369-residue protein sequence, read N- to C-terminus: 1-aminocyclopropane-1-carboxylate oxidase homolog 3 (369 aa).

The 102-residue stretch at 217-318 (KGLLMLSHYY…VSVACFFTTG (102 aa)) folds into the Fe2OG dioxygenase domain. Residues His-241, Asp-243, and His-297 each contribute to the Fe cation site.

The protein belongs to the iron/ascorbate-dependent oxidoreductase family. Requires Fe cation as cofactor.

This Arabidopsis thaliana (Mouse-ear cress) protein is 1-aminocyclopropane-1-carboxylate oxidase homolog 3.